A 140-amino-acid chain; its full sequence is MHRGVGPAFRVVRKMAASGAEPQVLVQYLVLRKDLSQAPFSWPAGALVAQACHAATAALHTHRDHPHTAAYLQELGRMRKVVLEAPDETTLKELAETLQQKNIDHMLWLEQPENIATCIALRPYPKEEVGQYLKKFRLFK.

This sequence belongs to the PTH2 family. PTRHD1 subfamily.

It catalyses the reaction an N-acyl-L-alpha-aminoacyl-tRNA + H2O = an N-acyl-L-amino acid + a tRNA + H(+). Functionally, as a putative peptidyl-tRNA hydrolase, it might be involved in releasing tRNAs from the ribosome during protein synthesis. Some evidence, however, suggests that it lacks peptidyl-tRNA hydrolase activity. This is Putative peptidyl-tRNA hydrolase PTRHD1 (PTRHD1) from Homo sapiens (Human).